A 291-amino-acid chain; its full sequence is Serine hydrolase BPHL (291 aa).

Residues 1 to 37 (MVAVLGGRGVLRLRLLLSALKPGIHVPRAGPAAAFGT) form the signal peptide. In terms of domain architecture, AB hydrolase-1 spans 62 to 181 (AVLLLPGMLG…DSMIYEGIRD (120 aa)). N6-acetyllysine is present on residues Lys86 and Lys119. The residue at position 126 (Lys126) is an N6-acetyllysine; alternate. At Lys126 the chain carries N6-succinyllysine; alternate. The active-site Nucleophile is the Ser139. N6-succinyllysine is present on Lys184. Lys191 carries the post-translational modification N6-acetyllysine; alternate. The residue at position 191 (Lys191) is an N6-succinyllysine; alternate. Lys217 is subject to N6-acetyllysine. Asp221 serves as a coordination point for Mg(2+). An N6-acetyllysine modification is found at Lys243. Asp244 (charge relay system) is an active-site residue. An N6-acetyllysine; alternate mark is found at Lys260 and Lys271. N6-succinyllysine; alternate occurs at positions 260 and 271. The active-site Charge relay system is His272.

This sequence belongs to the AB hydrolase superfamily. Lipase family. Monomer. May also form homodimers. In terms of tissue distribution, expressed at high levels in liver and kidney and lower levels in heart, intestine and skeletal muscle.

It localises to the mitochondrion. The enzyme catalyses L-homocysteine thiolactone + H2O = L-homocysteine + H(+). It carries out the reaction valacyclovir + H2O = acyclovir + L-valine + H(+). Specific alpha-amino acid ester serine hydrolase that prefers small, hydrophobic, and aromatic side chains and does not have a stringent requirement for the leaving group other than preferring a primary alcohol. Has homocysteine-thiolactonase activity (in vitro) and may play a significant role in the detoxification of homocysteine thiolactone in vivo. Catalyzes the hydrolytic activation of amino acid ester prodrugs of nucleoside analogs such as valacyclovir and valganciclovir, converting them into their active forms (acyclovir and ganciclovir). This chain is Serine hydrolase BPHL (BPHL), found in Homo sapiens (Human).